The following is a 485-amino-acid chain: BTB/POZ domain-containing protein YLR108C (485 aa).

In terms of domain architecture, BTB spans 26-121 (EVFKIRIGQK…LIKEYDYHFT (96 aa)).

It is found in the nucleus. This chain is BTB/POZ domain-containing protein YLR108C, found in Saccharomyces cerevisiae (strain ATCC 204508 / S288c) (Baker's yeast).